Here is a 588-residue protein sequence, read N- to C-terminus: MEESNNNNFLFSPDYIWSQLLENNNNNYNNNYNNINNSINENLLNELNSFQNTGVFDLDTNIEQQQQQQPTEIQQQLQNYQEFQQKKYQERQEQYQIQYQQSYIEPLNFNETYNNETYCNIIPQPPQVEQQQEQEQEQEQQQKQQQQQYIEKQIQEIIKIPEKRQTLNQIPIEMMQHNFFNTPKLDQQLLSNYSDFFKTNPILPTTTTTTTTTAITIDQQQQNHIDNQSLNNSNTKTSKNQQKDNNLPKKKNLSYDITKITFNNNNIEKKRDQTESSKNFREKKKEYVKEIESKILALTLENDKLKKENDSLKTINGSNLMRPEPESINMIMECKKIIKKLEKALIDNDERSLIYLLYHYHSETSKRYSLVEIEVDKIANPYSQIKLKLAGYIQNPTTLDIFDGNFNNNNNNNGNKEEEEEISWFIKYKNEANLTIEQSNKLDLLRNQHGLIFETLLKERKQLDNEILKVFNEIIIASYDGSNANLISDKGFELKSKLKSLKMKIISSLNLNLDTFSSISSILLPKQEALLLVRAHLFGSSKLNPQMDFLNNVWTNIISSNSSCSVFEILNSLKEFSDLENLELNKNS.

A coiled-coil region spans residues 127 to 157; sequence QVEQQQEQEQEQEQQQKQQQQQYIEKQIQEI. The span at 221–240 shows a compositional bias: low complexity; the sequence is QQNHIDNQSLNNSNTKTSKN. The interval 221–250 is disordered; sequence QQNHIDNQSLNNSNTKTSKNQQKDNNLPKK. One can recognise a bZIP domain in the interval 263–326; it reads NNNNIEKKRD…GSNLMRPEPE (64 aa). Positions 269-289 are basic motif; the sequence is KKRDQTESSKNFREKKKEYVK. Positions 291-312 are leucine-zipper; that stretch reads IESKILALTLENDKLKKENDSL.

This sequence belongs to the bZIP family.

Its subcellular location is the nucleus. In terms of biological role, probable transcriptional regulator. This is Probable basic-leucine zipper transcription factor M (bzpM) from Dictyostelium discoideum (Social amoeba).